The chain runs to 161 residues: Eukaryotic translation initiation factor 5A-1 (161 aa).

The segment covering 1–12 (MSDEEHQFESKA) has biased composition (basic and acidic residues). A disordered region spans residues 1-21 (MSDEEHQFESKADAGASKTYP). Lysine 52 carries the hypusine modification.

Belongs to the eIF-5A family. In terms of processing, lys-52 undergoes hypusination, a unique post-translational modification that consists in the addition of a butylamino group from spermidine to lysine side chain, leading to the formation of the unusual amino acid hypusine. eIF-5As are the only known proteins to undergo this modification, which is essential for their function.

Translation factor that promotes translation elongation and termination, particularly upon ribosome stalling at specific amino acid sequence contexts. Binds between the exit (E) and peptidyl (P) site of the ribosome and promotes rescue of stalled ribosome: specifically required for efficient translation of polyproline-containing peptides as well as other motifs that stall the ribosome. Acts as a ribosome quality control (RQC) cofactor by joining the RQC complex to facilitate peptidyl transfer during CAT tailing step. The sequence is that of Eukaryotic translation initiation factor 5A-1 from Medicago sativa (Alfalfa).